The primary structure comprises 210 residues: uncharacterized protein (210 aa).

The 90-residue stretch at 2 to 91 folds into the CS domain; it reads SRHPEVKWAQ…AEAKWWKKLV (90 aa). Residues 165-210 are disordered; the sequence is GMGGMGGMDEFEDESDDEEEVSKPQDAEKAAEAGKSQESDAKTETS. Positions 173-184 are enriched in acidic residues; that stretch reads DEFEDESDDEEE. The span at 185–210 shows a compositional bias: basic and acidic residues; it reads VSKPQDAEKAAEAGKSQESDAKTETS.

This is an uncharacterized protein from Oryza sativa subsp. indica (Rice).